The sequence spans 617 residues: Protein fem-1 homolog C (617 aa).

At Met-1 the chain carries N-acetylmethionine. ANK repeat units lie at residues 2-31 (DLKTAVFNAARDGKLRLLTKLLASKSKEEV), 40-70 (NGATPLLMAARYGHLDMVEFLLEQCSASIEV), 82-111 (EGAPPLWAASAAGHLKVVQSLLNHGASVNN), 115-144 (TNSTPLRAACFDGHLEIVKYLVEHKADLEV), 148-177 (HGHTCLMISCYKGHKEIAQYLLEKGADVNR), 181-210 (KGNTALHDCAESGSLDIMKMLLMYCAKMEK), and 213-242 (YGMTPLLSASVTGHTNIVDFLTHHAQTSKT). TPR repeat units follow at residues 245 to 279 (INALELLGATFVDKKRDLLGALKYWKKAMNMRYSD) and 338 to 371 (SYYIRYRGAVYADSGNFKRCINLWKYALDMQQNN). ANK repeat units lie at residues 481–523 (NNFS…DVNV) and 527–556 (DDNSPLHIAALNNHPDIMNLLIKSGAHFDA).

This sequence belongs to the fem-1 family. As to quaternary structure, component of a CRL2 E3 ubiquitin-protein ligase complex, also named ECS (Elongin BC-CUL2/5-SOCS-box protein) complex, composed of CUL2, Elongin BC (ELOB and ELOC), RBX1 and substrate-specific adapter FEM1C.

The protein operates within protein modification; protein ubiquitination. Its function is as follows. Substrate-recognition component of a Cul2-RING (CRL2) E3 ubiquitin-protein ligase complex of the DesCEND (destruction via C-end degrons) pathway, which recognizes a C-degron located at the extreme C terminus of target proteins, leading to their ubiquitination and degradation. The C-degron recognized by the DesCEND pathway is usually a motif of less than ten residues and can be present in full-length proteins, truncated proteins or proteolytically cleaved forms. The CRL2(FEM1C) complex specifically recognizes proteins with an arginine at the C-terminus: recognizes and binds proteins ending with -Lys/Arg-Xaa-Arg and -Lys/Arg-Xaa-Xaa-Arg C-degrons, such as SIL1 or OR51B2, leading to their ubiquitination and degradation. The CRL2(FEM1C) complex mediates ubiquitination and degradation of truncated MSRB1/SEPX1 selenoproteins produced by failed UGA/Sec decoding. This chain is Protein fem-1 homolog C, found in Bos taurus (Bovine).